We begin with the raw amino-acid sequence, 75 residues long: Sec-independent protein translocase protein TatA (75 aa).

Residues 1–21 (MGISIWQLLIVLGIVILLFGT) form a helical membrane-spanning segment. Positions 41 to 75 (SMSDEEEKNAEQQPLEKQNAEQQAQAEDKPKEKQG) are disordered. A compositionally biased stretch (low complexity) spans 56–65 (EKQNAEQQAQ). Residues 66–75 (AEDKPKEKQG) are compositionally biased toward basic and acidic residues.

The protein belongs to the TatA/E family. The Tat system comprises two distinct complexes: a TatABC complex, containing multiple copies of TatA, TatB and TatC subunits, and a separate TatA complex, containing only TatA subunits. Substrates initially bind to the TatABC complex, which probably triggers association of the separate TatA complex to form the active translocon.

It is found in the cell inner membrane. Part of the twin-arginine translocation (Tat) system that transports large folded proteins containing a characteristic twin-arginine motif in their signal peptide across membranes. TatA could form the protein-conducting channel of the Tat system. In Marinobacter nauticus (strain ATCC 700491 / DSM 11845 / VT8) (Marinobacter aquaeolei), this protein is Sec-independent protein translocase protein TatA.